The sequence spans 103 residues: MHVKKGDKVKVITGKDKGKSGKVLAAFPKKDRVLIEGINMVKKHTKPSNINPQGGILNVEAPIHVSNVMLIDPKTGEPTRVGYEVKGDKKVRVAKKSGEVIDK.

Belongs to the universal ribosomal protein uL24 family. In terms of assembly, part of the 50S ribosomal subunit.

Its function is as follows. One of two assembly initiator proteins, it binds directly to the 5'-end of the 23S rRNA, where it nucleates assembly of the 50S subunit. In terms of biological role, one of the proteins that surrounds the polypeptide exit tunnel on the outside of the subunit. This is Large ribosomal subunit protein uL24 from Listeria innocua serovar 6a (strain ATCC BAA-680 / CLIP 11262).